Here is a 484-residue protein sequence, read N- to C-terminus: Glutamyl-tRNA(Gln) amidotransferase subunit A (484 aa).

Active-site charge relay system residues include K76 and S151. Catalysis depends on S175, which acts as the Acyl-ester intermediate.

It belongs to the amidase family. GatA subfamily. As to quaternary structure, heterotrimer of A, B and C subunits.

The enzyme catalyses L-glutamyl-tRNA(Gln) + L-glutamine + ATP + H2O = L-glutaminyl-tRNA(Gln) + L-glutamate + ADP + phosphate + H(+). Its function is as follows. Allows the formation of correctly charged Gln-tRNA(Gln) through the transamidation of misacylated Glu-tRNA(Gln) in organisms which lack glutaminyl-tRNA synthetase. The reaction takes place in the presence of glutamine and ATP through an activated gamma-phospho-Glu-tRNA(Gln). The polypeptide is Glutamyl-tRNA(Gln) amidotransferase subunit A (Thioalkalivibrio sulfidiphilus (strain HL-EbGR7)).